The sequence spans 121 residues: Small ribosomal subunit protein uS13 (121 aa).

The disordered stretch occupies residues 89–121 (MRHRRGLPVRGQHTKNNARTRKGKAVSIAGKKK).

The protein belongs to the universal ribosomal protein uS13 family. As to quaternary structure, part of the 30S ribosomal subunit. Forms a loose heterodimer with protein S19. Forms two bridges to the 50S subunit in the 70S ribosome.

In terms of biological role, located at the top of the head of the 30S subunit, it contacts several helices of the 16S rRNA. In the 70S ribosome it contacts the 23S rRNA (bridge B1a) and protein L5 of the 50S subunit (bridge B1b), connecting the 2 subunits; these bridges are implicated in subunit movement. Contacts the tRNAs in the A and P-sites. This is Small ribosomal subunit protein uS13 from Levilactobacillus brevis (strain ATCC 367 / BCRC 12310 / CIP 105137 / JCM 1170 / LMG 11437 / NCIMB 947 / NCTC 947) (Lactobacillus brevis).